The sequence spans 443 residues: Glutamate-1-semialdehyde 2,1-aminomutase (443 aa).

An N6-(pyridoxal phosphate)lysine modification is found at K281.

The protein belongs to the class-III pyridoxal-phosphate-dependent aminotransferase family. HemL subfamily. Homodimer. The cofactor is pyridoxal 5'-phosphate.

Its subcellular location is the cytoplasm. The catalysed reaction is (S)-4-amino-5-oxopentanoate = 5-aminolevulinate. It participates in porphyrin-containing compound metabolism; protoporphyrin-IX biosynthesis; 5-aminolevulinate from L-glutamyl-tRNA(Glu): step 2/2. The polypeptide is Glutamate-1-semialdehyde 2,1-aminomutase (Leptospira interrogans serogroup Icterohaemorrhagiae serovar Lai (strain 56601)).